The primary structure comprises 220 residues: PRA1 family protein B4 (220 aa).

Residues 1–27 (MASSAPPVLPISNPQTVPSAAPSSVES) form a disordered region. Residues 12 to 27 (SNPQTVPSAAPSSVES) show a composition bias toward polar residues. 5 helical membrane passes run 83-103 (YSYF…FSLV), 105-125 (HPFS…LYLF), 146-166 (GCLI…SVLV), 170-190 (MIGV…DLFL), and 196-216 (AATG…PAVI).

Belongs to the PRA1 family. As to quaternary structure, interacts with PRA1B1, PRA1B2, PRA1B3, PRA1B5, PRA1B6 and PRA1E. In terms of tissue distribution, expressed in roots, lateral roots, lateral root caps, stomata and trichomes.

Its subcellular location is the endosome membrane. Its function is as follows. May be involved in both secretory and endocytic intracellular trafficking in the endosomal/prevacuolar compartments. In Arabidopsis thaliana (Mouse-ear cress), this protein is PRA1 family protein B4 (PRA1B4).